We begin with the raw amino-acid sequence, 421 residues long: Flap endonuclease 1 (421 aa).

The N-domain stretch occupies residues 1–109 (MGIKGLAKLL…HELIKRREKR (109 aa)). Position 34 (Asp34) interacts with Mg(2+). Residues Arg47 and Arg75 each coordinate DNA. Positions 91, 163, 165, 184, and 186 each coordinate Mg(2+). Residues 127–258 (EQDKQSKRLV…KTALKLIREH (132 aa)) form an I-domain region. Residue Glu163 participates in DNA binding. Residues Gly236 and Asp238 each coordinate DNA. Position 238 (Asp238) interacts with Mg(2+). Residues 284 to 307 (KKLDAQSDDDDEEGVESPSKEENN) form a disordered region. Residues 289–298 (QSDDDDEEGV) are compositionally biased toward acidic residues. An interaction with PCNA region spans residues 379-387 (PQTRMDSFF). A disordered region spans residues 398–421 (SAAKRKADAAKAKAAVSKKKTKKH).

It belongs to the XPG/RAD2 endonuclease family. FEN1 subfamily. In terms of assembly, interacts with PCNA. Three molecules of FEN1 bind to one PCNA trimer with each molecule binding to one PCNA monomer. PCNA stimulates the nuclease activity without altering cleavage specificity. It depends on Mg(2+) as a cofactor. In terms of processing, phosphorylated. Phosphorylation upon DNA damage induces relocalization to the nuclear plasma.

The protein resides in the nucleus. Its subcellular location is the nucleolus. The protein localises to the nucleoplasm. It is found in the mitochondrion. Structure-specific nuclease with 5'-flap endonuclease and 5'-3' exonuclease activities involved in DNA replication and repair. During DNA replication, cleaves the 5'-overhanging flap structure that is generated by displacement synthesis when DNA polymerase encounters the 5'-end of a downstream Okazaki fragment. It enters the flap from the 5'-end and then tracks to cleave the flap base, leaving a nick for ligation. Also involved in the long patch base excision repair (LP-BER) pathway, by cleaving within the apurinic/apyrimidinic (AP) site-terminated flap. Acts as a genome stabilization factor that prevents flaps from equilibrating into structures that lead to duplications and deletions. Also possesses 5'-3' exonuclease activity on nicked or gapped double-stranded DNA, and exhibits RNase H activity. Also involved in replication and repair of rDNA and in repairing mitochondrial DNA. The polypeptide is Flap endonuclease 1 (Phaeodactylum tricornutum (strain CCAP 1055/1)).